The sequence spans 149 residues: Protein SprT-like (149 aa).

One can recognise a SprT-like domain in the interval 6–147; the sequence is LQKLTEDISL…CGKCRGKIKR (142 aa). H67 lines the Zn(2+) pocket. Residue E68 is part of the active site. H71 contributes to the Zn(2+) binding site.

Belongs to the SprT family. Zn(2+) is required as a cofactor.

Its subcellular location is the cytoplasm. The polypeptide is Protein SprT-like (Bacillus velezensis (strain DSM 23117 / BGSC 10A6 / LMG 26770 / FZB42) (Bacillus amyloliquefaciens subsp. plantarum)).